The chain runs to 295 residues: MSKIVGSDRVKRGMAEMQKGGVIMDVVNAEQAKIAEEAGAVAVMALERVPSDIRAAGGVARMANPKIVEEVMNAVSIPVMAKARIGHITEARVLESMGVDYIDESEVLTPADEEYHLRKDQFTVPFVCGCRNLGEAARRIGEGAAMLRTKGEPGTGNIVEAVRHMRRVNSEVSRLTVMNDDEIMTFAKDLGAPYEVLKQIKDNGRLPVVNFAAGGVATPQDAALMMELGADGVFVGSGIFKSEDPEKFAKAIVQATTHYQDYELIGKLASELGTAMKGLDINQISLEERMQERGW.

D-ribose 5-phosphate is bound at residue Asp25. The active-site Schiff-base intermediate with D-ribose 5-phosphate is the Lys82. Gly154 contacts D-ribose 5-phosphate. Arg166 contacts D-glyceraldehyde 3-phosphate. D-ribose 5-phosphate-binding positions include Gly215 and 236 to 237 (GS).

Belongs to the PdxS/SNZ family. As to quaternary structure, in the presence of PdxT, forms a dodecamer of heterodimers.

It carries out the reaction aldehydo-D-ribose 5-phosphate + D-glyceraldehyde 3-phosphate + L-glutamine = pyridoxal 5'-phosphate + L-glutamate + phosphate + 3 H2O + H(+). The protein operates within cofactor biosynthesis; pyridoxal 5'-phosphate biosynthesis. Its function is as follows. Catalyzes the formation of pyridoxal 5'-phosphate from ribose 5-phosphate (RBP), glyceraldehyde 3-phosphate (G3P) and ammonia. The ammonia is provided by the PdxT subunit. Can also use ribulose 5-phosphate and dihydroxyacetone phosphate as substrates, resulting from enzyme-catalyzed isomerization of RBP and G3P, respectively. The polypeptide is Pyridoxal 5'-phosphate synthase subunit PdxS (Staphylococcus epidermidis (strain ATCC 35984 / DSM 28319 / BCRC 17069 / CCUG 31568 / BM 3577 / RP62A)).